Here is a 507-residue protein sequence, read N- to C-terminus: Glycerol kinase (507 aa).

Thr-14 lines the ADP pocket. ATP-binding residues include Thr-14, Thr-15, and Ser-16. Thr-14 provides a ligand contact to sn-glycerol 3-phosphate. Arg-18 contributes to the ADP binding site. Residues Arg-84, Glu-85, Tyr-137, and Asp-247 each contribute to the sn-glycerol 3-phosphate site. Residues Arg-84, Glu-85, Tyr-137, Asp-247, and Gln-248 each contribute to the glycerol site. Positions 269 and 312 each coordinate ADP. ATP is bound by residues Thr-269, Gly-312, Gln-316, and Gly-413. Residues Gly-413 and Asn-417 each contribute to the ADP site.

The protein belongs to the FGGY kinase family.

The catalysed reaction is glycerol + ATP = sn-glycerol 3-phosphate + ADP + H(+). It functions in the pathway polyol metabolism; glycerol degradation via glycerol kinase pathway; sn-glycerol 3-phosphate from glycerol: step 1/1. With respect to regulation, inhibited by fructose 1,6-bisphosphate (FBP). Functionally, key enzyme in the regulation of glycerol uptake and metabolism. Catalyzes the phosphorylation of glycerol to yield sn-glycerol 3-phosphate. In Psychromonas ingrahamii (strain DSM 17664 / CCUG 51855 / 37), this protein is Glycerol kinase.